Reading from the N-terminus, the 33-residue chain is Photosystem II reaction center protein Psb30 (33 aa).

A helical transmembrane segment spans residues 5–25 (IVFQLTSLVLILAAGPLVVVL).

It belongs to the Psb30/Ycf12 family. PSII is composed of 1 copy each of membrane proteins PsbA, PsbB, PsbC, PsbD, PsbE, PsbF, PsbH, PsbI, PsbJ, PsbK, PsbL, PsbM, PsbT, PsbX, PsbY, PsbZ, Psb30/Ycf12, peripheral proteins of the oxygen-evolving complex and a large number of cofactors. It forms dimeric complexes.

Its subcellular location is the plastid. The protein localises to the chloroplast thylakoid membrane. Functionally, a core subunit of photosystem II (PSII), probably helps stabilize the reaction center. The chain is Photosystem II reaction center protein Psb30 from Tetradesmus obliquus (Green alga).